The sequence spans 202 residues: ATP-dependent Clp protease proteolytic subunit (202 aa).

The Nucleophile role is filled by S101. Residue H126 is part of the active site.

This sequence belongs to the peptidase S14 family. Component of the chloroplastic Clp protease core complex.

It is found in the plastid. The protein localises to the chloroplast stroma. The catalysed reaction is Hydrolysis of proteins to small peptides in the presence of ATP and magnesium. alpha-casein is the usual test substrate. In the absence of ATP, only oligopeptides shorter than five residues are hydrolyzed (such as succinyl-Leu-Tyr-|-NHMec, and Leu-Tyr-Leu-|-Tyr-Trp, in which cleavage of the -Tyr-|-Leu- and -Tyr-|-Trp bonds also occurs).. Cleaves peptides in various proteins in a process that requires ATP hydrolysis. Has a chymotrypsin-like activity. Plays a major role in the degradation of misfolded proteins. This chain is ATP-dependent Clp protease proteolytic subunit, found in Liriodendron tulipifera (Tuliptree).